The primary structure comprises 290 residues: Alpha-mannosidase (290 aa).

Asp17 acts as the Nucleophile in catalysis. Asn64 carries N-linked (GlcNAc...) asparagine glycosylation.

The protein belongs to the glycosyl hydrolase 38 family. Dimer. It depends on Zn(2+) as a cofactor.

It carries out the reaction Hydrolysis of terminal, non-reducing alpha-D-mannose residues in alpha-D-mannosides.. Its activity is regulated as follows. Inhibited by swainsonine but not by 1-desoxymannojirimycin. Its function is as follows. Liberates mannose from p-nitrophenyl-alpha-D-mannoside. The polypeptide is Alpha-mannosidase (Lablab purpureus (Hyacinth bean)).